A 181-amino-acid polypeptide reads, in one-letter code: Ribonuclease HII (181 aa).

The 181-residue stretch at 1-181 (MICGIDEVGR…SLHRKNFKLI (181 aa)) folds into the RNase H type-2 domain. D6, E7, and D98 together coordinate a divalent metal cation.

The protein belongs to the RNase HII family. The cofactor is Mn(2+). Mg(2+) is required as a cofactor.

Its subcellular location is the cytoplasm. The enzyme catalyses Endonucleolytic cleavage to 5'-phosphomonoester.. Functionally, endonuclease that specifically degrades the RNA of RNA-DNA hybrids. The protein is Ribonuclease HII of Borreliella afzelii (strain PKo) (Borrelia afzelii).